Reading from the N-terminus, the 120-residue chain is Large ribosomal subunit protein P3y (120 aa).

The segment covering 81–92 (GGAAAGGGGGGE) has biased composition (gly residues). The interval 81-120 (GGAAAGGGGGGEAAAATKEEEKKKEESEEEEGDFGFDLFG) is disordered. A compositionally biased stretch (basic and acidic residues) spans 97-106 (TKEEEKKKEE).

This sequence belongs to the eukaryotic ribosomal protein P1/P2 family.

Its function is as follows. Plays an important role in the elongation step of protein synthesis. The sequence is that of Large ribosomal subunit protein P3y (RPP3B) from Arabidopsis thaliana (Mouse-ear cress).